The chain runs to 215 residues: Cytidylate kinase (215 aa).

10 to 18 (GPAASGKGT) contributes to the ATP binding site.

This sequence belongs to the cytidylate kinase family. Type 1 subfamily.

It localises to the cytoplasm. It carries out the reaction CMP + ATP = CDP + ADP. It catalyses the reaction dCMP + ATP = dCDP + ADP. The sequence is that of Cytidylate kinase from Bartonella tribocorum (strain CIP 105476 / IBS 506).